The sequence spans 330 residues: Free fatty acid receptor 2 (330 aa).

At 1–8 the chain is on the extracellular side; it reads MTPDWHSS. The helical transmembrane segment at 9-29 threads the bilayer; it reads LILTAYILIFLTGLPANLLAL. Topologically, residues 30–43 are cytoplasmic; that stretch reads RAFVSRVRQPQPAP. The chain crosses the membrane as a helical span at residues 44–64; that stretch reads VHILLLNLTLADLLLLLLLPF. Over 65–79 the chain is Extracellular; it reads RIVEAASNFRWYLPK. A helical membrane pass occupies residues 80 to 100; the sequence is IVCALTGFGFYSSIYCSTWLL. At 101–126 the chain is on the cytoplasmic side; sequence AGISIERYLGVAFPVQYKLSRRPLYG. The helical transmembrane segment at 127-147 threads the bilayer; it reads VIAALVAWIMSFGHCTIVIIV. Topologically, residues 148-184 are extracellular; it reads QYLNSTEQVGTENQITCYENFTQAQLDVVLPVRLELC. N151 and N167 each carry an N-linked (GlcNAc...) asparagine glycan. Residues 185-205 traverse the membrane as a helical segment; the sequence is LVLFFVPMTVTIFCYWRFVWI. At 206–219 the chain is on the cytoplasmic side; the sequence is MLTQPHVGAQRRRR. The helical transmembrane segment at 220–240 threads the bilayer; the sequence is AVGLAVVTLLNFLVCFGPYNM. Topologically, residues 241–255 are extracellular; that stretch reads SHLVGFHLRQSPSWR. Residues 256-276 form a helical membrane-spanning segment; that stretch reads VEAVVFSSLNASLDPLLFYFS. The Cytoplasmic segment spans residues 277–330; that stretch reads SSVVRRAFGKGLLLLRNPGSSMLGRGAEETVEGTKTDRGGSQTEGAQSSDFVTE. The interval 300–330 is disordered; it reads GRGAEETVEGTKTDRGGSQTEGAQSSDFVTE. Positions 302–314 are enriched in basic and acidic residues; that stretch reads GAEETVEGTKTDR. A compositionally biased stretch (polar residues) spans 315–330; the sequence is GGSQTEGAQSSDFVTE.

This sequence belongs to the G-protein coupled receptor 1 family. Interacts with FCN1 (via Fibrinogen C-terminal domain). As to expression, detected in whole wall and separated mucosa in the distal ileum and colon. Expressed by enteroendocrine cells expressing peptide YY (PYY) (at protein level).

Its subcellular location is the cell membrane. G protein-coupled receptor that is activated by a major product of dietary fiber digestion, the short chain fatty acids (SCFAs), and that plays a role in the regulation of whole-body energy homeostasis and in intestinal immunity. In omnivorous mammals, the short chain fatty acids acetate, propionate and butyrate are produced primarily by the gut microbiome that metabolizes dietary fibers. SCFAs serve as a source of energy but also act as signaling molecules. That G protein-coupled receptor is probably coupled to the pertussis toxin-sensitive, G(i/o)-alpha family of G proteins but also to the Gq family. Its activation results in the formation of inositol 1,4,5-trisphosphate, the mobilization of intracellular calcium, the phosphorylation of the MAPK3/ERK1 and MAPK1/ERK2 kinases and the inhibition of intracellular cAMP accumulation. May play a role in glucose homeostasis by regulating the secretion of GLP-1, in response to short-chain fatty acids accumulating in the intestine. May also regulate the production of LEP/Leptin, a hormone acting on the central nervous system to inhibit food intake. Finally, may also regulate whole-body energy homeostasis through adipogenesis regulating both differentiation and lipid storage of adipocytes. In parallel to its role in energy homeostasis, may also mediate the activation of the inflammatory and immune responses by SCFA in the intestine, regulating the rapid production of chemokines and cytokines. May also play a role in the resolution of the inflammatory response and control chemotaxis in neutrophils. In addition to SCFAs, may also be activated by the extracellular lectin FCN1 in a process leading to activation of monocytes and inducing the secretion of interleukin-8/IL-8 in response to the presence of microbes. The protein is Free fatty acid receptor 2 (Ffar2) of Rattus norvegicus (Rat).